An 876-amino-acid chain; its full sequence is Leucine--tRNA ligase (876 aa).

The 'HIGH' region motif lies at 43–53 (PYPSGRIHMGH). Residues 632 to 636 (KMSKS) carry the 'KMSKS' region motif. Position 635 (Lys-635) interacts with ATP.

This sequence belongs to the class-I aminoacyl-tRNA synthetase family.

The protein resides in the cytoplasm. It catalyses the reaction tRNA(Leu) + L-leucine + ATP = L-leucyl-tRNA(Leu) + AMP + diphosphate. This is Leucine--tRNA ligase from Rhizobium etli (strain CIAT 652).